Here is a 100-residue protein sequence, read N- to C-terminus: Small ribosomal subunit protein uS14c (100 aa).

This sequence belongs to the universal ribosomal protein uS14 family. Part of the 30S ribosomal subunit.

It localises to the plastid. Functionally, binds 16S rRNA, required for the assembly of 30S particles. In Cuscuta reflexa (Southern Asian dodder), this protein is Small ribosomal subunit protein uS14c (rps14).